A 487-amino-acid chain; its full sequence is Transcriptional adapter ADA2b (487 aa).

The segment covering 1–13 has biased composition (polar residues); the sequence is MGRSRGNFQNFED. Positions 1 to 25 are disordered; it reads MGRSRGNFQNFEDPTQRTRKKKNAA. The ZZ-type zinc-finger motif lies at 42–98; the sequence is GGKYNCDYCQKDITGKIRIKCAVCPDFDLCIECMSVGAEITPHKCDHPYRVMGNLTF. The Zn(2+) site is built by cysteine 47, cysteine 50, cysteine 62, cysteine 65, cysteine 71, cysteine 74, histidine 84, and histidine 88. Residues 100-152 form the SANT domain; sequence LICPDWSADDEMLLLEGLEIYGLGNWAEVAEHVGTKSKEQCLEHYRNIYLNSP. Lysine 216 carries the N6-acetyllysine; by GCN5 modification. The span at 368–383 shows a compositional bias: basic and acidic residues; that stretch reads RKRKRENEEGMNRGKE. The segment at 368–388 is disordered; sequence RKRKRENEEGMNRGKESGQFG. Residues 401 to 487 form the SWIRM domain; the sequence is QASSSYVNDL…MLVKKGIAQL (87 aa).

Interacts in vitro with the HAT domain of GCN5 and with the DNA-binding domain of the transcriptional activator DREB1B/CBF1. Interacts with BZIP11. Acetylated in vitro by GCN5, but acetylation is not essential for biological activity. In terms of tissue distribution, expressed in roots, leaves, stems, flowers and siliques, with the strongest activity in the meristematic zones.

It localises to the nucleus. In terms of biological role, required for the function of some acidic activation domains, which activate transcription from a distant site. The exact mechanism of action is not yet known. ADA2 stimulates the acetyltransferase activity of GCN5 on free histones or nucleosomes, probably by opening up the promoter region. Mediates auxin and cytokinin signals in the control of cell proliferation and might be involved in repression of a freezing tolerance pathway at warm temperature. Involved in the positive regulation of salt-induced gene expression by maintaining locus-specific acetylation of histones H4 and H3. This Arabidopsis thaliana (Mouse-ear cress) protein is Transcriptional adapter ADA2b (ADA2B).